The following is a 371-amino-acid chain: tRNA-specific 2-thiouridylase MnmA (371 aa).

ATP contacts are provided by residues 13–20 and methionine 39; that span reads GMSGGVDS. The tract at residues 99–101 is interaction with target base in tRNA; it reads NPD. Cysteine 104 acts as the Nucleophile in catalysis. A disulfide bond links cysteine 104 and cysteine 200. Glycine 128 is a binding site for ATP. An interaction with tRNA region spans residues 150–152; the sequence is KDQ. Cysteine 200 acts as the Cysteine persulfide intermediate in catalysis. An interaction with tRNA region spans residues 309 to 310; the sequence is RY.

Belongs to the MnmA/TRMU family.

The protein resides in the cytoplasm. It carries out the reaction S-sulfanyl-L-cysteinyl-[protein] + uridine(34) in tRNA + AH2 + ATP = 2-thiouridine(34) in tRNA + L-cysteinyl-[protein] + A + AMP + diphosphate + H(+). In terms of biological role, catalyzes the 2-thiolation of uridine at the wobble position (U34) of tRNA, leading to the formation of s(2)U34. In Bacillus subtilis (strain 168), this protein is tRNA-specific 2-thiouridylase MnmA.